Here is a 273-residue protein sequence, read N- to C-terminus: MFKCKNFNYAVFGNPINHSKSPEIHSLFSKQTGISHFYKSCNVPLNSLYAVLQDFFKKDGRGANITAPFKQEAYFFCNKLTKRAEVAQSVNTLKKIDNCNILGDNTDGIGLLSDLIRLNFIKKNYSILIIGAGGAARGVLFPLLSYGCSICIFNRTVLNAEKLVLQFHKYGNINVFNTNSLHVKSFDLIINATSHFIQDKDNFIPFSCVSSKTCFYDMNYQTDNTFFFDWSRKTGSNFFSNGIGMLVFQAAHSFFLWHNVLPEIDYIIDLLNK.

Residues 19–21 (SKS) and Thr-66 contribute to the shikimate site. The active-site Proton acceptor is the Lys-70. Positions 91 and 107 each coordinate shikimate. Residues 131 to 135 (GAGGA) and Met-218 contribute to the NADP(+) site. Tyr-220 lines the shikimate pocket. Gly-242 contacts NADP(+).

This sequence belongs to the shikimate dehydrogenase family. Homodimer.

The catalysed reaction is shikimate + NADP(+) = 3-dehydroshikimate + NADPH + H(+). It functions in the pathway metabolic intermediate biosynthesis; chorismate biosynthesis; chorismate from D-erythrose 4-phosphate and phosphoenolpyruvate: step 4/7. In terms of biological role, involved in the biosynthesis of the chorismate, which leads to the biosynthesis of aromatic amino acids. Catalyzes the reversible NADPH linked reduction of 3-dehydroshikimate (DHSA) to yield shikimate (SA). In Buchnera aphidicola subsp. Acyrthosiphon pisum (strain 5A), this protein is Shikimate dehydrogenase (NADP(+)).